The following is a 321-amino-acid chain: NADPH-dependent codeinone reductase 1-2 (321 aa).

Residues threonine 27 and aspartate 51 each contribute to the NADPH site. Active-site proton donor residues include tyrosine 56 and histidine 119. Histidine 119 is a binding site for substrate. NADPH contacts are provided by serine 165, glutamine 187, serine 214, leucine 216, serine 264, and arginine 269. Residues 299–321 form a disordered region; it reads SADFLLSPTGPFKTEEEFWDEKD.

The protein belongs to the aldo/keto reductase family. In terms of tissue distribution, latex secreting cells (laticifer cells). Expressed constitutively in all organs with highest levels in capsules. Restricted to the parietal region of sieve elements adjacent or proximal to laticifers in roots, stems, leaves and carpels.

It localises to the cytoplasm. It is found in the cytosol. It catalyses the reaction codeine + NADP(+) = codeinone + NADPH + H(+). The catalysed reaction is neopine + NADP(+) = neopinone + NADPH + H(+). It carries out the reaction morphine + NADP(+) = morphinone + NADPH + H(+). The enzyme catalyses neomorphine + NADP(+) = neomorphinone + NADPH + H(+). Its pathway is alkaloid biosynthesis; morphine biosynthesis. Functionally, NADPH-dependent codeinone reductase involved in biosynthesis of morphinan-type benzylisoquinoline and opiate alkaloids natural products. Reduces codeinone to codeine in the penultimate step in morphine biosynthesis. Can use morphinone, hydrocodone and hydromorphone as substrate during reductive reaction with NADPH as cofactor, and morphine and dihydrocodeine as substrate during oxidative reaction with NADP as cofactor. Converts morphinone to morphine, and neomorphinone to neomorphine. Reduces irreversibly neopinone, a spontaneous isomer of codeinone, to neopine; in planta, neopine levels are limited to low levels. This is NADPH-dependent codeinone reductase 1-2 from Papaver somniferum (Opium poppy).